The primary structure comprises 43 residues: Subtilosin-A (43 aa).

Positions 1–8 are excised as a propeptide; that stretch reads MKKAVIVE. Positions 9–43 form a cross-link, cyclopeptide (Asn-Gly); sequence NKGCATCSIGAACLVDGPIPDFEIAGATGLFGLWG. The 2-cysteinyl-D-phenylalanine (Cys-Phe) cross-link spans 12 to 39; sequence CATCSIGAACLVDGPIPDFEIAGATGLF. A cross-link (2-cysteinyl-D-allo-threonine (Cys-Thr)) is located at residues 15-36; sequence CSIGAACLVDGPIPDFEIAGAT. Residues 21 to 30 constitute a cross-link (2-cysteinyl-L-phenylalanine (Cys-Phe)); the sequence is CLVDGPIPDF.

Belongs to the bacteriocin class V family. Post-translationally, this sactipeptide undergoes unique processing steps that include proteolytic cleavage after Glu-8, and covalent linkage of the alpha-amino of Asn-9 with the carboxyl of Gly-43 to form a cyclopeptide. Thioether cross-links are formed between cysteines and the alpha-carbons of other amino acids, Cys-12 to Phe-39, Cys-15 to Thr-36, and Cys-21 to Phe-30. In forming these cross-links, Thr-36 and Phe-39 are converted to D-amino acids. Propeptide cleavage and cyclopeptide formation only occur after all 3 thioether cross-links are formed.

The protein resides in the secreted. Functionally, has bacteriocidal activity against some Gram-positive bacteria such as Listeria, some species of Bacillus and E.faecium. A single mutation (Thr-14-Ile) confers hemolytic activity against rabbit and human blood. This Bacillus subtilis (strain 168) protein is Subtilosin-A (sboA).